Reading from the N-terminus, the 146-residue chain is Large ribosomal subunit protein uL15 (146 aa).

Positions 1-61 (MELNSLKPAA…GGQMPMHRRL (61 aa)) are disordered. Residues 30–39 (TATKGHKGQK) are compositionally biased toward basic residues.

The protein belongs to the universal ribosomal protein uL15 family. Part of the 50S ribosomal subunit.

Its function is as follows. Binds to the 23S rRNA. The sequence is that of Large ribosomal subunit protein uL15 from Geotalea uraniireducens (strain Rf4) (Geobacter uraniireducens).